The sequence spans 510 residues: Acyl-CoA desaturase 1 (510 aa).

The Cytoplasmic segment spans residues 1–112 (MPTSGTTIEL…TLNNWHQHLN (112 aa)). The helical transmembrane segment at 113–133 (WLNMVLVCGMPMIGWYFALSG) threads the bilayer. Topologically, residues 134 to 138 (KVPLH) are lumenal. The helical transmembrane segment at 139–159 (LNVFLFSVFYYAVGGVSITAG) threads the bilayer. The Cytoplasmic segment spans residues 160–255 (YHRLWSHRSY…DWTIRFQHRH (96 aa)). Residues His-161, His-166, His-198, His-201, and His-202 each contribute to the Fe cation site. The short motif at 161 to 166 (HRLWSH) is the Histidine box-1 element. The Histidine box-2 motif lies at 198–202 (HRIHH). A helical membrane pass occupies residues 256 to 276 (YILLMLLTAFVIPTLICGYFF). Residues 277–280 (NDYM) lie on the Lumenal side of the membrane. Residues 281 to 301 (GGLIYAGFIRVFVIQQATFCI) form a helical membrane-spanning segment. The Cytoplasmic segment spans residues 302-510 (NSLAHYIGTQ…GEIYETGKFF (209 aa)). Fe cation contacts are provided by His-306, His-335, His-338, and His-339. The Histidine box-3 signature appears at 335 to 339 (HNFHH). The 79-residue stretch at 409–487 (LPMWDKQTFL…LADMRVAVIK (79 aa)) folds into the Cytochrome b5 heme-binding domain. Heme contacts are provided by His-444 and His-470.

The protein belongs to the fatty acid desaturase type 1 family. It depends on Fe(2+) as a cofactor.

It is found in the endoplasmic reticulum membrane. The catalysed reaction is octadecanoyl-CoA + 2 Fe(II)-[cytochrome b5] + O2 + 2 H(+) = (9Z)-octadecenoyl-CoA + 2 Fe(III)-[cytochrome b5] + 2 H2O. It catalyses the reaction hexadecanoyl-CoA + 2 Fe(II)-[cytochrome b5] + O2 + 2 H(+) = (9Z)-hexadecenoyl-CoA + 2 Fe(III)-[cytochrome b5] + 2 H2O. Its function is as follows. Stearoyl-CoA desaturase that utilizes O(2) and electrons from reduced cytochrome b5 to introduce the first double bond into saturated fatty acyl-CoA substrates. Catalyzes the insertion of a cis double bond at the delta-9 position into fatty acyl-CoA substrates including palmitoyl-CoA and stearoyl-CoA. Required for the biosynthesis of membrane phospholipids, cholesterol esters and triglycerides. Regulates fatty acid desaturation, that is, the ratio of unsaturated versus saturated fatty acyl chains, by competing with the acyltransferase STC1 for the common substrate C16:0-CoA. SCT1 sequesters C16:0-CoA into lipids, thereby shielding it from desaturation by OLE1. In Saccharomyces cerevisiae (strain ATCC 204508 / S288c) (Baker's yeast), this protein is Acyl-CoA desaturase 1 (OLE1).